Here is a 182-residue protein sequence, read N- to C-terminus: ATP synthase subunit delta (182 aa).

Belongs to the ATPase delta chain family. F-type ATPases have 2 components, F(1) - the catalytic core - and F(0) - the membrane proton channel. F(1) has five subunits: alpha(3), beta(3), gamma(1), delta(1), epsilon(1). CF(0) has four main subunits: a(1), b(1), b'(1) and c(10-14). The alpha and beta chains form an alternating ring which encloses part of the gamma chain. F(1) is attached to F(0) by a central stalk formed by the gamma and epsilon chains, while a peripheral stalk is formed by the delta, b and b' chains.

It is found in the cellular thylakoid membrane. F(1)F(0) ATP synthase produces ATP from ADP in the presence of a proton or sodium gradient. F-type ATPases consist of two structural domains, F(1) containing the extramembraneous catalytic core and F(0) containing the membrane proton channel, linked together by a central stalk and a peripheral stalk. During catalysis, ATP synthesis in the catalytic domain of F(1) is coupled via a rotary mechanism of the central stalk subunits to proton translocation. Its function is as follows. This protein is part of the stalk that links CF(0) to CF(1). It either transmits conformational changes from CF(0) to CF(1) or is implicated in proton conduction. This is ATP synthase subunit delta from Synechococcus sp. (strain WH7803).